The chain runs to 204 residues: CDP-archaeol synthase (204 aa).

6 consecutive transmembrane segments (helical) span residues Val5–Leu25, Met43–Val63, Phe91–Ala111, Gly116–Val136, Pro147–Phe167, and Val175–Phe195.

Belongs to the CDP-archaeol synthase family. Mg(2+) is required as a cofactor.

Its subcellular location is the cell membrane. It catalyses the reaction 2,3-bis-O-(geranylgeranyl)-sn-glycerol 1-phosphate + CTP + H(+) = CDP-2,3-bis-O-(geranylgeranyl)-sn-glycerol + diphosphate. It participates in membrane lipid metabolism; glycerophospholipid metabolism. Catalyzes the formation of CDP-2,3-bis-(O-geranylgeranyl)-sn-glycerol (CDP-archaeol) from 2,3-bis-(O-geranylgeranyl)-sn-glycerol 1-phosphate (DGGGP) and CTP. This reaction is the third ether-bond-formation step in the biosynthesis of archaeal membrane lipids. The polypeptide is CDP-archaeol synthase (Thermofilum pendens (strain DSM 2475 / Hrk 5)).